The sequence spans 269 residues: 5'-nucleotidase SurE (269 aa).

A divalent metal cation-binding residues include aspartate 11, aspartate 12, serine 43, and asparagine 101.

Belongs to the SurE nucleotidase family. A divalent metal cation is required as a cofactor.

It is found in the cytoplasm. It carries out the reaction a ribonucleoside 5'-phosphate + H2O = a ribonucleoside + phosphate. Its function is as follows. Nucleotidase that shows phosphatase activity on nucleoside 5'-monophosphates. The polypeptide is 5'-nucleotidase SurE (Prochlorococcus marinus (strain MIT 9515)).